We begin with the raw amino-acid sequence, 489 residues long: MTKSDLLFDKFNDKHGKFLVFFGTFVDTPKLGELRIREKTSVGVLNGIIRFVNRNSLDPVKDCLDHDSSLSPEDVTVVDIIGKDKTRNNSFYFPGFVDTHNHVSQYPNVGVFGNSTLLDWLEKYTFPIEAALANENIAREVYNKVISKTLSHGTTTVAYYNTIDLKSTKLLAQLSSLLGQRVLVGKVCMDTNGPEYYIEDTKTSFESTVKVVKYIRETICDPLVNPIVTPRFAPSCSRELMQQLSKLVKDENIHVQTHLSENKEEIQWVQDLFPECESYTDVYDKYGLLTEKTVLAHCIHLTDAEARVIKQRRCGISHCPISNSSLTSGECRVRWLLDQGIKVGLGTDVSAGHSCSILTTGRQAFAVSRHLAMRETDHAKLSVSECLFLATMGGAQVLRMDETLGTFDVGKQFDAQMIDTNAPGSNVDMFHWQLKEKDQMQEQEQEQGQDPYKNPPLLTNEDIIAKWFFNGDDRNTTKVWVAGQQVYQI.

2 residues coordinate Zn(2+): histidine 100 and histidine 102. Substrate contacts are provided by residues histidine 102–glutamine 105, arginine 231–phenylalanine 232, histidine 258–glutamate 261, and aspartate 348. Zn(2+) is bound by residues histidine 258 and aspartate 348.

It belongs to the metallo-dependent hydrolases superfamily. ATZ/TRZ family. Requires Zn(2+) as cofactor.

The protein resides in the cytoplasm. The catalysed reaction is guanine + H2O + H(+) = xanthine + NH4(+). Its pathway is purine metabolism; guanine degradation; xanthine from guanine: step 1/1. Catalyzes the hydrolytic deamination of guanine, producing xanthine and ammonia. This Saccharomyces cerevisiae (strain ATCC 204508 / S288c) (Baker's yeast) protein is Probable guanine deaminase (GUD1).